Here is a 330-residue protein sequence, read N- to C-terminus: MAAVDSFYLLYREIARSCNCYMEALALVGAWYTARKSITVICDFYSLVRLHFIPRLGSRPDLIKQYGRWAVISGATDGIGKAYAEELASHGLNVILISQEEEKLQAAAKHIADTYRVETLVLVADFSRGREIYAPIREALRDRDIGILVNDVGAFYPYPQYFSQVPEDTLWDIVNVNIAAASLMVHIVLPGMVERKKGAIVTVSSGSCCKPTPQLAAFSASKAYLDHFSRALQYEYASKGIFVQSLIPFYVTSSGAAPASFLHRCPWLAPSPRVYAQHAVSTLGISKRTTGYWSHSIQFLFAQYMPEWLWVWGANLLNRSLRKEALSCQA.

Alanine 2 is subject to N-acetylalanine. Positions 2–82 are required for mitochondria translocation; that stretch reads AAVDSFYLLY…SGATDGIGKA (81 aa). NADP(+) is bound by residues 74 to 80, aspartate 125, and lysine 222; that span reads GATDGIG.

The protein belongs to the short-chain dehydrogenases/reductases (SDR) family. 17-beta-HSD 3 subfamily. Interacts with STYXL1.

The protein localises to the mitochondrion. The chain is Inactive hydroxysteroid dehydrogenase-like protein 1 (Hsdl1) from Mus musculus (Mouse).